Reading from the N-terminus, the 366-residue chain is MKMSFRWYGKKDPVTLEEIKAIPGMQGIVTAVYDVPVGQAWPLENILELKQMVEEAGLEITVIESIPVHEDIKQGKPNRDELIENYKTSIRNVGAAGIPVVCYNFMPVFDWTRSDLHHPLPDGSTSLAFLKSDLAGVDPVADDLNLPGWDSSYSKEEMKNVIENYRQNISEEDLWANLEYFIKAIMPTAEEAGVKMAIHPDDPPYGIFGLPRIITGQEAVERFLNLYDSEHNGITMCVGSYASDPKNDVLAMTEYALKRNRINFMHTRNVTAGAWGFQETAHLSQSGDIDMNGVVKLLVDYDWQGALRPDHGRRIWGDQTKTPGYGLYDRALGATYFNGLYEANMRAAGKTPDFGIKVKTVGNKEG.

The protein belongs to the mannonate dehydratase family. It depends on Fe(2+) as a cofactor. Requires Mn(2+) as cofactor.

It carries out the reaction D-mannonate = 2-dehydro-3-deoxy-D-gluconate + H2O. The protein operates within carbohydrate metabolism; pentose and glucuronate interconversion. Its function is as follows. Catalyzes the dehydration of D-mannonate. The chain is Mannonate dehydratase from Streptococcus pneumoniae (strain 70585).